The following is a 347-amino-acid chain: NAD-dependent alcohol dehydrogenase (347 aa).

Lysine 11 carries the post-translational modification N6-methyllysine; partial. 7 residues coordinate Zn(2+): cysteine 38, histidine 68, glutamate 98, cysteine 101, cysteine 104, cysteine 112, and cysteine 154. Lysine 213 bears the N6-methyllysine; partial mark.

The protein belongs to the zinc-containing alcohol dehydrogenase family. Homodimer and homotetramer. The cofactor is Zn(2+).

It catalyses the reaction a primary alcohol + NAD(+) = an aldehyde + NADH + H(+). The catalysed reaction is a secondary alcohol + NAD(+) = a ketone + NADH + H(+). This Saccharolobus solfataricus (strain ATCC 35092 / DSM 1617 / JCM 11322 / P2) (Sulfolobus solfataricus) protein is NAD-dependent alcohol dehydrogenase (adh).